Consider the following 382-residue polypeptide: MQDAVPRLTFTLRDEERLMMKIGVFVPIGNNGWLISTHAPQYMPTFELNKAIVQKAEHYHFDFALSMIKLRGFGGKTEFWDHNLESFTLMAGLAAVTSRIQIYATAATLTLPPAIVARMAATIDSISGGRFGVNLVTGWQKPEYEQMGIWPGDDYFSRRYDYLTEYVQVLRDLWGTGKSDFKGDFFTMNDCRVSPQPSVPMKVICAGQSDAGMAFSAQYADFNFCFGKGVNTPTAFAPTAARMKQAAEQTGRDVGSYVLFMVIADETDDAARAKWEHYKAGADEEALSWLTEQSQKDTRSGTDTNVRQMADPTSAVNINMGTLVGSYASVARMLDEVASVPGAEGVLLTFDDFLSGIETFGERIQPLMQCRAHLPVLTQEVA.

Residues 68–69 (IK), N134, E143, 159–160 (RY), and S209 each bind FMN.

Belongs to the NtaA/SnaA/DszA monooxygenase family. RutA subfamily.

The catalysed reaction is uracil + FMNH2 + NADH + O2 = (Z)-3-ureidoacrylate + FMN + NAD(+) + H2O + H(+). The enzyme catalyses thymine + FMNH2 + NADH + O2 = (Z)-2-methylureidoacrylate + FMN + NAD(+) + H2O + H(+). In terms of biological role, catalyzes the pyrimidine ring opening between N-3 and C-4 by an unusual flavin hydroperoxide-catalyzed mechanism, adding oxygen atoms in the process to yield ureidoacrylate peracid, that immediately reacts with FMN forming ureidoacrylate and FMN-N(5)-oxide. The FMN-N(5)-oxide reacts spontaneously with NADH to produce FMN. Requires the flavin reductase RutF to regenerate FMN in vivo. This is Pyrimidine monooxygenase RutA from Escherichia coli (strain B / BL21-DE3).